We begin with the raw amino-acid sequence, 465 residues long: FAD-dependent monooxygenase pyr5 (465 aa).

The signal sequence occupies residues 1 to 16 (MRVLIIGGSIAGLTLA). Glutamate 30, glycine 44, and arginine 103 together coordinate FAD. Residue tyrosine 210 is part of the active site. Positions 306 and 319 each coordinate FAD. The helical transmembrane segment at 440-456 (PTFPLTVAGLCLVAIVI) threads the bilayer.

This sequence belongs to the paxM FAD-dependent monooxygenase family. FAD serves as cofactor.

It localises to the membrane. The catalysed reaction is 4-hydroxy-3-[(2E,6E)-farnesyl]-6-(pyridin-3-yl)-2H-pyran-2-one + NADPH + O2 + H(+) = 2-oxo-3-[(8S)-epoxy-(2E,6E)-farnesyl]-6-(pyridin-3-yl)-2H-pyran-4-olate + NADP(+) + H2O. It participates in secondary metabolite biosynthesis; terpenoid biosynthesis. Functionally, FAD-dependent monooxygenase; part of the gene cluster that mediates the biosynthesis of pyripyropene A, a specific human acyl-coenzyme A:cholesterol acyltransferase 2 inhibitor. The first step of the pathway is the synthesis of nicotinyl-CoA from nicotinic acid by the nicotinic acid-CoA ligase pyr1. Nicotinyl-CoA is then a substrate of polyketide synthase pyr2 to produce 4-hydroxy-6-(3-pyridinyl)-2H-pyran-2-one (HPPO) which is further prenylated by the polyprenyl transferase pyr6 to yield farnesyl-HPPO. The next steps consist of an epoxidation of farnesyl-HPPO to epoxyfarnesyl-HPPO by FAD-dependent monooxygenase pyr5 and a cyclization of the terpenoid portion by the terpene cyclase pyr4 to yield deacetyl-pyripyropene E. The 2 cytochrome P450 monooxygenases pyr3 and pyr9, and the 2 acetyltransferases pyr7 and pyr8 are involved in the conversion of deacetyl-pyripyropene E into pyripyropene A through several cycles of oxidation and acetylation steps. Pyr7 acetylates deacetyl-pyripyropene E to pyripyropene E which is oxidized to 11-deacetyl-pyripyropene O by pyr3, which is in turn acetylated into pyripyropene O by pyr8. Pyripyropene O is then oxidized to deacetyl-pyripyropene A by pyr9. Deacetyl-pyripyropene A is finally acetylated to pyripyropene A by pyr8. The sequence is that of FAD-dependent monooxygenase pyr5 from Aspergillus fumigatus (strain ATCC MYA-4609 / CBS 101355 / FGSC A1100 / Af293) (Neosartorya fumigata).